A 227-amino-acid chain; its full sequence is Ribosomal RNA large subunit methyltransferase E (227 aa).

The S-adenosyl-L-methionine site is built by glycine 78, tryptophan 80, aspartate 103, aspartate 119, and aspartate 143. Lysine 183 (proton acceptor) is an active-site residue.

Belongs to the class I-like SAM-binding methyltransferase superfamily. RNA methyltransferase RlmE family.

It localises to the cytoplasm. It carries out the reaction uridine(2552) in 23S rRNA + S-adenosyl-L-methionine = 2'-O-methyluridine(2552) in 23S rRNA + S-adenosyl-L-homocysteine + H(+). Functionally, specifically methylates the uridine in position 2552 of 23S rRNA at the 2'-O position of the ribose in the fully assembled 50S ribosomal subunit. The chain is Ribosomal RNA large subunit methyltransferase E from Rickettsia rickettsii (strain Iowa).